The chain runs to 296 residues: GTPase Era (296 aa).

One can recognise an Era-type G domain in the interval 3–170; that stretch reads KSGFVTIVGR…KELMFKYIPE (168 aa). The interval 11–18 is G1; that stretch reads GRPNVGKS. 11–18 is a binding site for GTP; the sequence is GRPNVGKS. Positions 37 to 41 are G2; that stretch reads QTTRN. A G3 region spans residues 58–61; the sequence is DTPG. GTP is bound by residues 58-62 and 120-123; these read DTPGI and NKID. A G4 region spans residues 120-123; that stretch reads NKID. A G5 region spans residues 149–151; it reads ISA. Residues 201–278 enclose the KH type-2 domain; sequence LSEEVPHGIA…YIRLWVKVKE (78 aa).

The protein belongs to the TRAFAC class TrmE-Era-EngA-EngB-Septin-like GTPase superfamily. Era GTPase family. As to quaternary structure, monomer.

It is found in the cytoplasm. It localises to the cell membrane. An essential GTPase that binds both GDP and GTP, with rapid nucleotide exchange. Plays a role in 16S rRNA processing and 30S ribosomal subunit biogenesis and possibly also in cell cycle regulation and energy metabolism. In Clostridium botulinum (strain Okra / Type B1), this protein is GTPase Era.